The sequence spans 456 residues: Bifunctional protein GlmU (456 aa).

Positions 1-229 (MLNNAMSVVI…LSEVEGVNNR (229 aa)) are pyrophosphorylase. Residues 11 to 14 (LAAG), Lys-25, Gln-76, 81 to 82 (GT), 103 to 105 (YGD), Gly-140, Glu-154, Asn-169, and Asn-227 contribute to the UDP-N-acetyl-alpha-D-glucosamine site. Asp-105 contributes to the Mg(2+) binding site. Asn-227 serves as a coordination point for Mg(2+). The tract at residues 230–250 (LQLSRLERVYQSEQAEKLLLA) is linker. The segment at 251–456 (GVMLRDPARF…EGWRRPVKKK (206 aa)) is N-acetyltransferase. Arg-333 and Lys-351 together coordinate UDP-N-acetyl-alpha-D-glucosamine. His-363 functions as the Proton acceptor in the catalytic mechanism. 2 residues coordinate UDP-N-acetyl-alpha-D-glucosamine: Tyr-366 and Asn-377. Acetyl-CoA-binding positions include Ala-380, 386–387 (NY), Ser-405, Ala-423, and Arg-440.

In the N-terminal section; belongs to the N-acetylglucosamine-1-phosphate uridyltransferase family. This sequence in the C-terminal section; belongs to the transferase hexapeptide repeat family. As to quaternary structure, homotrimer. Mg(2+) is required as a cofactor.

The protein localises to the cytoplasm. It catalyses the reaction alpha-D-glucosamine 1-phosphate + acetyl-CoA = N-acetyl-alpha-D-glucosamine 1-phosphate + CoA + H(+). The catalysed reaction is N-acetyl-alpha-D-glucosamine 1-phosphate + UTP + H(+) = UDP-N-acetyl-alpha-D-glucosamine + diphosphate. Its pathway is nucleotide-sugar biosynthesis; UDP-N-acetyl-alpha-D-glucosamine biosynthesis; N-acetyl-alpha-D-glucosamine 1-phosphate from alpha-D-glucosamine 6-phosphate (route II): step 2/2. It functions in the pathway nucleotide-sugar biosynthesis; UDP-N-acetyl-alpha-D-glucosamine biosynthesis; UDP-N-acetyl-alpha-D-glucosamine from N-acetyl-alpha-D-glucosamine 1-phosphate: step 1/1. It participates in bacterial outer membrane biogenesis; LPS lipid A biosynthesis. Its function is as follows. Catalyzes the last two sequential reactions in the de novo biosynthetic pathway for UDP-N-acetylglucosamine (UDP-GlcNAc). The C-terminal domain catalyzes the transfer of acetyl group from acetyl coenzyme A to glucosamine-1-phosphate (GlcN-1-P) to produce N-acetylglucosamine-1-phosphate (GlcNAc-1-P), which is converted into UDP-GlcNAc by the transfer of uridine 5-monophosphate (from uridine 5-triphosphate), a reaction catalyzed by the N-terminal domain. This Escherichia coli O81 (strain ED1a) protein is Bifunctional protein GlmU.